The primary structure comprises 278 residues: MAIRKYKPTTPGRRGASVSDFAEITRSTPEKSLVRPLHGKGGRNAHGRITTRHKGGGHKRAYRVIDFRRHDKDGVDAKVAHIEYDPNRTANIALLHYLDGEKRYIIAPYGLKQGAIVESGANADIKPGNNLPLRNIPAGTVIHAVELRPGGGAKLARSAGVSIQLLGKEGSYASLRMPSGEIRRVDVRCRATVGEVGNAEQANINWGKAGRMRWKGKRPTVRGVVMNPVDHPHGGGEGKTSGGRHPVSPWGKPEGRTRKPNKPSDKLIVRRRRTGKKR.

2 disordered regions span residues 27 to 58 and 224 to 278; these read STPEKSLVRPLHGKGGRNAHGRITTRHKGGGH and VVMN…GKKR. The segment covering 37 to 58 has biased composition (basic residues); sequence LHGKGGRNAHGRITTRHKGGGH. The span at 253–268 shows a compositional bias: basic and acidic residues; that stretch reads PEGRTRKPNKPSDKLI. A compositionally biased stretch (basic residues) spans 269–278; the sequence is VRRRRTGKKR.

This sequence belongs to the universal ribosomal protein uL2 family. As to quaternary structure, part of the 50S ribosomal subunit. Forms a bridge to the 30S subunit in the 70S ribosome.

Functionally, one of the primary rRNA binding proteins. Required for association of the 30S and 50S subunits to form the 70S ribosome, for tRNA binding and peptide bond formation. It has been suggested to have peptidyltransferase activity; this is somewhat controversial. Makes several contacts with the 16S rRNA in the 70S ribosome. The polypeptide is Large ribosomal subunit protein uL2 (Mycobacterium sp. (strain KMS)).